The primary structure comprises 427 residues: Glutamate-1-semialdehyde 2,1-aminomutase (427 aa).

K265 carries the N6-(pyridoxal phosphate)lysine modification.

Belongs to the class-III pyridoxal-phosphate-dependent aminotransferase family. HemL subfamily. As to quaternary structure, homodimer. Pyridoxal 5'-phosphate serves as cofactor.

It is found in the cytoplasm. The catalysed reaction is (S)-4-amino-5-oxopentanoate = 5-aminolevulinate. It functions in the pathway porphyrin-containing compound metabolism; protoporphyrin-IX biosynthesis; 5-aminolevulinate from L-glutamyl-tRNA(Glu): step 2/2. The sequence is that of Glutamate-1-semialdehyde 2,1-aminomutase from Pseudomonas syringae pv. syringae (strain B728a).